Here is a 336-residue protein sequence, read N- to C-terminus: Inositol 2-dehydrogenase (336 aa).

The protein belongs to the Gfo/Idh/MocA family. Homotetramer.

The catalysed reaction is myo-inositol + NAD(+) = scyllo-inosose + NADH + H(+). In terms of biological role, involved in the oxidation of myo-inositol (MI) to 2-keto-myo-inositol (2KMI or 2-inosose). The polypeptide is Inositol 2-dehydrogenase (Pseudomonas fluorescens (strain SBW25)).